A 152-amino-acid chain; its full sequence is Deoxyuridine 5'-triphosphate nucleotidohydrolase (152 aa).

Substrate contacts are provided by residues 71–73 (RSG), N84, 88–90 (LID), and M98.

It belongs to the dUTPase family. Requires Mg(2+) as cofactor.

It catalyses the reaction dUTP + H2O = dUMP + diphosphate + H(+). The protein operates within pyrimidine metabolism; dUMP biosynthesis; dUMP from dCTP (dUTP route): step 2/2. In terms of biological role, this enzyme is involved in nucleotide metabolism: it produces dUMP, the immediate precursor of thymidine nucleotides and it decreases the intracellular concentration of dUTP so that uracil cannot be incorporated into DNA. The protein is Deoxyuridine 5'-triphosphate nucleotidohydrolase of Shewanella baltica (strain OS185).